The following is a 158-amino-acid chain: N-acetylgalactosamine-specific phosphotransferase enzyme IIB component 1 (158 aa).

Positions 1 to 158 constitute a PTS EIIB type-4 domain; the sequence is MTSPNILLTR…PGDQKEQIPD (158 aa). The Pros-phosphohistidine intermediate role is filled by His-17.

The protein localises to the cytoplasm. Its function is as follows. The phosphoenolpyruvate-dependent sugar phosphotransferase system (sugar PTS), a major carbohydrate active -transport system, catalyzes the phosphorylation of incoming sugar substrates concomitantly with their translocation across the cell membrane. This system is involved in N-acetylgalactosamine transport. This Escherichia coli (strain K12) protein is N-acetylgalactosamine-specific phosphotransferase enzyme IIB component 1 (agaB).